Here is a 276-residue protein sequence, read N- to C-terminus: NADPH-dependent 7-cyano-7-deazaguanine reductase (276 aa).

83 to 85 serves as a coordination point for substrate; it reads IES. An NADPH-binding site is contributed by 85–86; the sequence is SK. The Thioimide intermediate role is filled by C184. Residue D191 is the Proton donor of the active site. Residue 223–224 participates in substrate binding; it reads HE. An NADPH-binding site is contributed by 252 to 253; it reads RG.

It belongs to the GTP cyclohydrolase I family. QueF type 2 subfamily. In terms of assembly, homodimer.

It is found in the cytoplasm. The enzyme catalyses 7-aminomethyl-7-carbaguanine + 2 NADP(+) = 7-cyano-7-deazaguanine + 2 NADPH + 3 H(+). It functions in the pathway tRNA modification; tRNA-queuosine biosynthesis. Functionally, catalyzes the NADPH-dependent reduction of 7-cyano-7-deazaguanine (preQ0) to 7-aminomethyl-7-deazaguanine (preQ1). This chain is NADPH-dependent 7-cyano-7-deazaguanine reductase, found in Pseudomonas fluorescens (strain Pf0-1).